A 115-amino-acid chain; its full sequence is U17-barytoxin-Tl1c (115 aa).

The N-terminal stretch at 1–20 (MKTIIVFLSLLVLATKFGDA) is a signal peptide. Residues 21-74 (KEGVNQKQKKEVTQNEFREEYLNEMAAMSLVQQLEAIERALFENEAGRNSRQKR) constitute a propeptide that is removed on maturation. 3 cysteine pairs are disulfide-bonded: Cys-75/Cys-89, Cys-82/Cys-94, and Cys-88/Cys-109.

Belongs to the neurotoxin 14 (magi-1) family. 03 (ICK-30-40) subfamily. As to expression, expressed by the venom gland.

It is found in the secreted. Functionally, ion channel inhibitor. This Trittame loki (Brush-footed trapdoor spider) protein is U17-barytoxin-Tl1c.